The following is a 317-amino-acid chain: Beta-ketoacyl-[acyl-carrier-protein] synthase III (317 aa).

Active-site residues include cysteine 112 and histidine 244. The interval 245-249 is ACP-binding; the sequence is QANLR. The active site involves asparagine 274.

This sequence belongs to the thiolase-like superfamily. FabH family. Homodimer.

It is found in the cytoplasm. It catalyses the reaction malonyl-[ACP] + acetyl-CoA + H(+) = 3-oxobutanoyl-[ACP] + CO2 + CoA. The protein operates within lipid metabolism; fatty acid biosynthesis. Functionally, catalyzes the condensation reaction of fatty acid synthesis by the addition to an acyl acceptor of two carbons from malonyl-ACP. Catalyzes the first condensation reaction which initiates fatty acid synthesis and may therefore play a role in governing the total rate of fatty acid production. Possesses both acetoacetyl-ACP synthase and acetyl transacylase activities. Its substrate specificity determines the biosynthesis of branched-chain and/or straight-chain of fatty acids. The protein is Beta-ketoacyl-[acyl-carrier-protein] synthase III of Citrobacter koseri (strain ATCC BAA-895 / CDC 4225-83 / SGSC4696).